Consider the following 702-residue polypeptide: Ferrioxamine B receptor (702 aa).

A signal peptide spans 1 to 30 (MPLEMFMFATTRMALLIGGAIGGATFPLFA). Positions 55-168 (PDIETPQSVS…PGGIVALTSR (114 aa)) constitute a TBDR plug domain. The TBDR beta-barrel domain occupies 173-702 (DAGGEVKLFA…SIVGSVSWAF (530 aa)).

The protein belongs to the TonB-dependent receptor family.

The protein localises to the cell outer membrane. Ferrioxamine binding and uptake, in association with the TonB protein. May play a role in intestinal colonization. This chain is Ferrioxamine B receptor (foxA), found in Salmonella typhimurium (strain SL1344).